Consider the following 286-residue polypeptide: ATP synthase gamma chain (286 aa).

It belongs to the ATPase gamma chain family. In terms of assembly, F-type ATPases have 2 components, CF(1) - the catalytic core - and CF(0) - the membrane proton channel. CF(1) has five subunits: alpha(3), beta(3), gamma(1), delta(1), epsilon(1). CF(0) has three main subunits: a, b and c.

It is found in the cell inner membrane. Produces ATP from ADP in the presence of a proton gradient across the membrane. The gamma chain is believed to be important in regulating ATPase activity and the flow of protons through the CF(0) complex. The chain is ATP synthase gamma chain from Pseudomonas aeruginosa (strain UCBPP-PA14).